The following is a 515-amino-acid chain: Galactokinase (515 aa).

Residues R48, D54, H55, and D57 each coordinate alpha-D-galactose. G155, G157, S159, and S160 together coordinate ATP. D205 serves as a coordination point for alpha-D-galactose. The active-site Proton acceptor is D205. S249, N250, and K251 together coordinate ATP. Residue Y259 coordinates alpha-D-galactose.

It belongs to the GHMP kinase family. GalK subfamily.

It carries out the reaction alpha-D-galactose + ATP = alpha-D-galactose 1-phosphate + ADP + H(+). Its pathway is carbohydrate metabolism; galactose metabolism. Its function is as follows. Galactokinase is a key enzyme in the galactose metabolism where it catalyzes the conversion of alpha-D-galactose to galactose 1-phosphate. Can also induce the transcription of the gal genes in response to the organism being challenged with galactose as the sole source of carbon. This is Galactokinase from Candida albicans (Yeast).